The chain runs to 29 residues: Toxin TdII-3 (29 aa).

Residues 1 to 29 (KDGYLVGTDGCKYGCFTRPGHFCANEECL) form the LCN-type CS-alpha/beta domain.

Belongs to the long (4 C-C) scorpion toxin superfamily. Sodium channel inhibitor family. Beta subfamily. Expressed by the venom gland.

It localises to the secreted. Its function is as follows. Binds voltage-independently to sodium channels (Nav) and shifts the voltage of activation toward more negative potentials. This toxin is active against mammals and also affects neuromuscular preparations of frog. This Tityus discrepans (Venezuelan scorpion) protein is Toxin TdII-3.